The following is a 617-amino-acid chain: MPKYRSFTTINGKNMAGARALWRATGVKDADFGKPIIAVVNSFTEFVPGHIHLRELGQLVSKEIEKSGGIAKEFNTIAIDDGIAMGHSGMLYSLPSRELIADSIEYMIQAHCVDAMVCISNCDKITPGMLLAALRLNIPSVFVSGGPMESGKILVNEKIIKIDLVDAMMHGANKNTSNKKLLNIEKSACPTCGSCSGMFTANSMNCLTEVLGLSFPGNGSLLATHIDRKNLFLKAGKIIVRNTKNYYENNDSSLLPRSIVTKENLKNAIILDISMGGSSNTVLHLLAMAYEANINFKMIDIDLLSRKVPHLCKISPSSSKYYMEDFHRAGGVFGILSELNKINLLNTSILNILRMSLEKTINKFDILKTKDKKIISFYSSGPGNKKTIYPFSQSFRWKKLDKDRISGCIRSKKYAYSKDGGLAVLTGNLAKNGSIIKTAAITNQSSKIFSGPAKVYESQEDAVYAILNNYIKSGDIIVIRYEGPKGGPGMQEMLYPTTYLKSMGLDKKCALITDGRFSGGTSGISIGHISPEAANKGLIALVYDNDIININIIDRSLKLKISSDEIRKRKEKEENRGIFAYTPKKRLRKISDSLKIYSMFATSADKGAVRNIHKINF.

Asp81 serves as a coordination point for Mg(2+). [2Fe-2S] cluster is bound at residue Cys122. Residues Asp123 and Lys124 each coordinate Mg(2+). Lys124 carries the post-translational modification N6-carboxylysine. Cys195 contributes to the [2Fe-2S] cluster binding site. Glu492 serves as a coordination point for Mg(2+). Ser518 (proton acceptor) is an active-site residue.

This sequence belongs to the IlvD/Edd family. As to quaternary structure, homodimer. The cofactor is [2Fe-2S] cluster. Mg(2+) serves as cofactor.

It carries out the reaction (2R)-2,3-dihydroxy-3-methylbutanoate = 3-methyl-2-oxobutanoate + H2O. The catalysed reaction is (2R,3R)-2,3-dihydroxy-3-methylpentanoate = (S)-3-methyl-2-oxopentanoate + H2O. The protein operates within amino-acid biosynthesis; L-isoleucine biosynthesis; L-isoleucine from 2-oxobutanoate: step 3/4. It participates in amino-acid biosynthesis; L-valine biosynthesis; L-valine from pyruvate: step 3/4. In terms of biological role, functions in the biosynthesis of branched-chain amino acids. Catalyzes the dehydration of (2R,3R)-2,3-dihydroxy-3-methylpentanoate (2,3-dihydroxy-3-methylvalerate) into 2-oxo-3-methylpentanoate (2-oxo-3-methylvalerate) and of (2R)-2,3-dihydroxy-3-methylbutanoate (2,3-dihydroxyisovalerate) into 2-oxo-3-methylbutanoate (2-oxoisovalerate), the penultimate precursor to L-isoleucine and L-valine, respectively. This chain is Dihydroxy-acid dehydratase, found in Buchnera aphidicola subsp. Cinara cedri (strain Cc).